Consider the following 697-residue polypeptide: Elongation factor G (697 aa).

The tr-type G domain occupies 8–282 (EDYRNIGIMA…AVVDYLPSPL (275 aa)). GTP contacts are provided by residues 17-24 (AHIDAGKT), 81-85 (DTPGH), and 135-138 (NKMD).

Belongs to the TRAFAC class translation factor GTPase superfamily. Classic translation factor GTPase family. EF-G/EF-2 subfamily.

Its subcellular location is the cytoplasm. Catalyzes the GTP-dependent ribosomal translocation step during translation elongation. During this step, the ribosome changes from the pre-translocational (PRE) to the post-translocational (POST) state as the newly formed A-site-bound peptidyl-tRNA and P-site-bound deacylated tRNA move to the P and E sites, respectively. Catalyzes the coordinated movement of the two tRNA molecules, the mRNA and conformational changes in the ribosome. In Mycoplasmopsis agalactiae (strain NCTC 10123 / CIP 59.7 / PG2) (Mycoplasma agalactiae), this protein is Elongation factor G.